A 294-amino-acid chain; its full sequence is MSVISMKNLLETGVHFGHQTRKWNPKMAPYVFTARNGIHIIDLQKTVQKAKEAYDALKKLTSEGKKVLFVGTKKQARGAIEREALHSNMFFINNRWPGGLLTNWNTVKKSIARLKKLEAMEADNSFEKEVKTKKEVLTLRRELEKLRKTLGGIKDMATIPEIMFVIDPKKEEIAVKEARKLGLKIFAVVDTNCDPELIDYPIPGNDDAIRAISLFLETMSNAVIEGTGGVVEQPRFSEDLDSEALALEYQGEYDESGKFIMDEDADSKKSKAEEPVIPTAEEPAITTIEVDQNE.

Residues 261–274 show a composition bias toward basic and acidic residues; it reads MDEDADSKKSKAEE. Residues 261 to 294 form a disordered region; it reads MDEDADSKKSKAEEPVIPTAEEPAITTIEVDQNE.

Belongs to the universal ribosomal protein uS2 family.

This chain is Small ribosomal subunit protein uS2, found in Leptospira borgpetersenii serovar Hardjo-bovis (strain JB197).